Reading from the N-terminus, the 165-residue chain is ATP synthase subunit b (165 aa).

A helical transmembrane segment spans residues 5 to 27 (INSTTLGNIIITLGSVFLLYYLI).

It belongs to the ATPase B chain family. In terms of assembly, F-type ATPases have 2 components, F(1) - the catalytic core - and F(0) - the membrane proton channel. F(1) has five subunits: alpha(3), beta(3), gamma(1), delta(1), epsilon(1). F(0) has three main subunits: a(1), b(2) and c(10-14). The alpha and beta chains form an alternating ring which encloses part of the gamma chain. F(1) is attached to F(0) by a central stalk formed by the gamma and epsilon chains, while a peripheral stalk is formed by the delta and b chains.

It localises to the cell membrane. Its function is as follows. F(1)F(0) ATP synthase produces ATP from ADP in the presence of a proton or sodium gradient. F-type ATPases consist of two structural domains, F(1) containing the extramembraneous catalytic core and F(0) containing the membrane proton channel, linked together by a central stalk and a peripheral stalk. During catalysis, ATP synthesis in the catalytic domain of F(1) is coupled via a rotary mechanism of the central stalk subunits to proton translocation. Component of the F(0) channel, it forms part of the peripheral stalk, linking F(1) to F(0). This is ATP synthase subunit b from Streptococcus thermophilus (strain CNRZ 1066).